The chain runs to 869 residues: Probable beta-glucosidase F (869 aa).

Residues 1-19 form the signal peptide; sequence MRVLSAIALVASLVPSALS. N-linked (GlcNAc...) asparagine glycans are attached at residues Asn-69, Asn-77, and Asn-261. The active site involves Asp-289. Asn-332, Asn-364, Asn-399, Asn-425, and Asn-478 each carry an N-linked (GlcNAc...) asparagine glycan. A disordered region spans residues 678–698; it reads AYPPTRPPKGPTPTYPTTIPN. Residues 681 to 691 are compositionally biased toward pro residues; that stretch reads PTRPPKGPTPT. N-linked (GlcNAc...) asparagine glycosylation occurs at Asn-728.

The protein belongs to the glycosyl hydrolase 3 family.

Its subcellular location is the secreted. It catalyses the reaction Hydrolysis of terminal, non-reducing beta-D-glucosyl residues with release of beta-D-glucose.. The protein operates within glycan metabolism; cellulose degradation. Functionally, beta-glucosidases are one of a number of cellulolytic enzymes involved in the degradation of cellulosic biomass. Catalyzes the last step releasing glucose from the inhibitory cellobiose. This is Probable beta-glucosidase F (bglF) from Neosartorya fischeri (strain ATCC 1020 / DSM 3700 / CBS 544.65 / FGSC A1164 / JCM 1740 / NRRL 181 / WB 181) (Aspergillus fischerianus).